A 157-amino-acid chain; its full sequence is Peptide methionine sulfoxide reductase MsrA (157 aa).

Residue cysteine 10 is part of the active site.

It belongs to the MsrA Met sulfoxide reductase family.

It catalyses the reaction L-methionyl-[protein] + [thioredoxin]-disulfide + H2O = L-methionyl-(S)-S-oxide-[protein] + [thioredoxin]-dithiol. The catalysed reaction is [thioredoxin]-disulfide + L-methionine + H2O = L-methionine (S)-S-oxide + [thioredoxin]-dithiol. Its function is as follows. Has an important function as a repair enzyme for proteins that have been inactivated by oxidation. Catalyzes the reversible oxidation-reduction of methionine sulfoxide in proteins to methionine. This is Peptide methionine sulfoxide reductase MsrA from Clostridium botulinum (strain Okra / Type B1).